The sequence spans 72 residues: uncharacterized protein (72 aa).

At 1–12 (MSKHKHEWTESV) the chain is on the cytoplasmic side. Residues 13-32 (ANSGPASILSYCASSILMTV) traverse the membrane as a helical segment. Topologically, residues 33–46 (TNKFVVNLDNFNMN) are lumenal. The chain crosses the membrane as a helical span at residues 47 to 69 (FVMLFVQSLVCTVTLCILRIVGV). Residues 70–72 (ANF) are Cytoplasmic-facing.

It belongs to the TPT transporter family. SLC35D subfamily.

It localises to the membrane. This is an uncharacterized protein from Saccharomyces cerevisiae (strain RM11-1a) (Baker's yeast).